Consider the following 1014-residue polypeptide: Isoleucine--tRNA ligase (1014 aa).

The 'HIGH' region signature appears at 48 to 58 (PTANGRPGIHH). Residues 628–632 (KMSKS) carry the 'KMSKS' region motif. Residue Lys-631 participates in ATP binding.

The protein belongs to the class-I aminoacyl-tRNA synthetase family. IleS type 2 subfamily. As to quaternary structure, monomer. Requires Zn(2+) as cofactor.

It is found in the cytoplasm. The enzyme catalyses tRNA(Ile) + L-isoleucine + ATP = L-isoleucyl-tRNA(Ile) + AMP + diphosphate. In terms of biological role, catalyzes the attachment of isoleucine to tRNA(Ile). As IleRS can inadvertently accommodate and process structurally similar amino acids such as valine, to avoid such errors it has two additional distinct tRNA(Ile)-dependent editing activities. One activity is designated as 'pretransfer' editing and involves the hydrolysis of activated Val-AMP. The other activity is designated 'posttransfer' editing and involves deacylation of mischarged Val-tRNA(Ile). The protein is Isoleucine--tRNA ligase of Dehalococcoides mccartyi (strain ATCC BAA-2266 / KCTC 15142 / 195) (Dehalococcoides ethenogenes (strain 195)).